Reading from the N-terminus, the 1671-residue chain is Fatty acid synthase alpha subunit aflA (1671 aa).

Residues Ile-40–Thr-60 are disordered. Pro residues predominate over residues Glu-47–Pro-58. The region spanning Asp-75–Lys-153 is the Carrier domain. Position 113 is an O-(pantetheine 4'-phosphoryl)serine (Ser-113). Residues Gly-492–Ala-729 are ketoreductase (KR) domain. The region spanning Met-926–Ala-1428 is the Ketosynthase family 3 (KS3) domain. The active-site For beta-ketoacyl synthase activity is Cys-1113. Over residues Ser-1244 to Ser-1270 the composition is skewed to low complexity. The segment at Ser-1244–Thr-1288 is disordered. Active-site for beta-ketoacyl synthase activity residues include His-1313 and His-1354. The interval Pro-1497–Gly-1521 is disordered. Position 1552 (Asp-1552) interacts with Mg(2+). Acetyl-CoA contacts are provided by residues Asp-1552–Val-1554, Glu-1598–Ser-1608, His-1622–Asn-1625, and Ile-1652–Tyr-1654. Position 1653 (Ser-1653) interacts with Mg(2+).

Belongs to the thiolase-like superfamily. Fungal fatty acid synthetase subunit alpha family. [Alpha(6)beta(6)] hexamers of two multifunctional subunits (alpha and beta). Post-translationally, 4'-phosphopantetheine is transferred from CoA to a specific serine of the acyl carrier domain by the C-terminal PPT domain. This modification is essential for activity because fatty acids are bound in thioester linkage to the sulfhydryl of the prosthetic group.

The enzyme catalyses acetyl-CoA + n malonyl-CoA + 2n NADPH + 4n H(+) = a long-chain-acyl-CoA + n CoA + n CO2 + 2n NADP(+).. It catalyses the reaction a fatty acyl-[ACP] + malonyl-[ACP] + H(+) = a 3-oxoacyl-[ACP] + holo-[ACP] + CO2. The catalysed reaction is a (3R)-hydroxyacyl-[ACP] + NADP(+) = a 3-oxoacyl-[ACP] + NADPH + H(+). Its pathway is mycotoxin biosynthesis; aflatoxin biosynthesis. In terms of biological role, fatty acid synthase alpha subunit; part of the gene cluster that mediates the biosynthesis of aflatoxins, a group of polyketide-derived furanocoumarins, and part of the most toxic and carcinogenic compounds among the known mycotoxins. The four major aflatoxins produced by A.parasiticus are aflatoxin B1 (AFB1), aflatoxin B2 (AFB2), aflatoxin G1 (AFG1) and aflatoxin G2 (AFG2). Within the aflatoxin pathway, the fungal fatty acid synthase aflA/aflB provides the hexanoyl starter unit to the acyl-carrier protein (ACP) domain of the norsolorinic acid synthase to allow the first step of the pathway. The biosynthesis of aflatoxins begins with the norsolorinic acid synthase aflC that combines a hexanoyl starter unit produced by the fatty acid synthase aflA/aflB and 7 malonyl-CoA extender units to synthesize the precursor NOR. The second step is the conversion of NOR to averantin (AVN) and requires the norsolorinic acid ketoreductase aflD, which catalyzes the dehydration of norsolorinic acid to form (1'S)-averantin. The norsolorinic acid reductases aflE and aflF may also play a role in the conversion of NOR to AVN. The cytochrome P450 monooxygenase aflG then catalyzes the hydroxylation of AVN to 5'hydroxyaverantin (HAVN). The next step is performed by the 5'-hydroxyaverantin dehydrogenase aflH that transforms HAVN to 5'-oxoaverantin (OAVN) which is further converted to averufin (AVF) by aflK that plays a dual role in the pathway, as a 5'-oxoaverantin cyclase that mediates conversion of 5'-oxoaverantin, as well as a versicolorin B synthase in a later step in the pathway. The averufin oxidase aflI catalyzes the conversion of AVF to versiconal hemiacetal acetate (VHA). VHA is then the substrate for the versiconal hemiacetal acetate esterase aflJ to yield versiconal (VAL). Versicolorin B synthase aflK then converts VAL to versicolorin B (VERB) by closing the bisfuran ring of aflatoxin which is required for DNA-binding, thus giving to aflatoxin its activity as a mutagen. Then, the activity of the versicolorin B desaturase aflL leads to versicolorin A (VERA). A branch point starts from VERB since it can also be converted to dihydrodemethylsterigmatocystin (DMDHST), probably also by aflL, VERA being a precursor for aflatoxins B1 and G1, and DMDHST for aflatoxins B2 and G2. Next, the versicolorin reductase aflM and the cytochrome P450 monooxygenase aflN are involved in conversion of VERA to demethylsterigmatocystin (DMST). AflX and aflY seem also involved in this step, through probable aflX-mediated epoxide ring-opening step following versicolorin A oxidation and aflY-mediated Baeyer-Villiger oxidation required for the formation of the xanthone ring. The methyltransferase aflO then leads to the modification of DMST to sterigmatocystin (ST), and of DMDHST to dihydrosterigmatocystin (DHST). Both ST and DHST are then substrates of the O-methyltransferase aflP to yield O-methylsterigmatocystin (OMST) and dihydro-O-methylsterigmatocystin (DHOMST), respectively. Finally OMST is converted to aflatoxins B1 and G1, and DHOMST to aflatoxins B2 and G2, via the action of several enzymes including O-methylsterigmatocystin oxidoreductase aflQ, the cytochrome P450 monooxygenase aflU, but also the NADH-dependent flavin oxidoreductase nadA which is specifically required for the synthesis of AFG1. This Aspergillus parasiticus (strain ATCC 56775 / NRRL 5862 / SRRC 143 / SU-1) protein is Fatty acid synthase alpha subunit aflA.